We begin with the raw amino-acid sequence, 246 residues long: uncharacterized protein (246 aa).

Residues 1-30 form the signal peptide; sequence MKKKQVSHAIIISVMLSFVIAVFHTIHASE.

This is an uncharacterized protein from Bacillus subtilis (strain 168).